A 646-amino-acid chain; its full sequence is Ribonuclease Y (646 aa).

A helical transmembrane segment spans residues 4–24 (VLVVLLSLVLVVLSVLILAVA). Disordered regions lie at residues 43–62 (PRTPAARGVGDVTGPADFDE) and 69–118 (LPAP…HGGS). Residues 336-402 (VVTVLHLPGD…RITLAALVSD (67 aa)) form the KH domain. One can recognise an HD domain in the interval 462 to 555 (VLAHLIESAH…TQAADQISGG (94 aa)).

Belongs to the RNase Y family.

Its subcellular location is the cell membrane. Its function is as follows. Endoribonuclease that initiates mRNA decay. The polypeptide is Ribonuclease Y (Frankia casuarinae (strain DSM 45818 / CECT 9043 / HFP020203 / CcI3)).